The chain runs to 1133 residues: Nuclear pore complex-interacting protein family member B5 (1133 aa).

The helical transmembrane segment at 60 to 84 (WLHVIIAFPTSYKVVITLWIVYLWV) threads the bilayer. 3 disordered regions span residues 241 to 262 (NRMGHQPPPPTQQHSITDNSLS), 290 to 575 (LTPL…IKTP), and 868 to 1133 (ERLR…RRLS). Over residues 252–262 (QQHSITDNSLS) the composition is skewed to polar residues. A compositionally biased stretch (pro residues) spans 349 to 359 (PLPPSALPSAP). Composition is skewed to basic and acidic residues over residues 406-416 (DNIKTPAERLR), 448-458 (DNIKTPAERLR), 490-500 (DNIKTPAERLR), 528-538 (DNIKTPAERLR), 903-913 (DNIKTPAERLR), 945-955 (DNIKTPAERLR), and 987-997 (DNIKTPAERLR).

Belongs to the NPIP family.

The protein localises to the membrane. The protein is Nuclear pore complex-interacting protein family member B5 (NPIPB5) of Homo sapiens (Human).